The primary structure comprises 140 residues: Small ribosomal subunit protein uS12 (140 aa).

A disordered region spans residues 1 to 28 (MPTINQLVRKSRKALEKKSTAPALQKGY). A 3-methylthioaspartic acid modification is found at Asp102. Positions 119–140 (GVDKRRQSRSKYGAKRPKEAKK) are disordered. Positions 124–140 (RQSRSKYGAKRPKEAKK) are enriched in basic residues.

The protein belongs to the universal ribosomal protein uS12 family. As to quaternary structure, part of the 30S ribosomal subunit. Contacts proteins S8 and S17. May interact with IF1 in the 30S initiation complex.

Its function is as follows. With S4 and S5 plays an important role in translational accuracy. In terms of biological role, interacts with and stabilizes bases of the 16S rRNA that are involved in tRNA selection in the A site and with the mRNA backbone. Located at the interface of the 30S and 50S subunits, it traverses the body of the 30S subunit contacting proteins on the other side and probably holding the rRNA structure together. The combined cluster of proteins S8, S12 and S17 appears to hold together the shoulder and platform of the 30S subunit. This Clostridioides difficile (strain 630) (Peptoclostridium difficile) protein is Small ribosomal subunit protein uS12.